The following is a 417-amino-acid chain: Sulfate adenylyltransferase (417 aa).

Polar residues predominate over residues 1–10 (MTSITANQKP). The interval 1-20 (MTSITANQKPSKLVPPHGSP) is disordered.

The protein belongs to the sulfate adenylyltransferase family.

The enzyme catalyses sulfate + ATP + H(+) = adenosine 5'-phosphosulfate + diphosphate. It participates in sulfur metabolism; hydrogen sulfide biosynthesis; sulfite from sulfate: step 1/3. This is Sulfate adenylyltransferase from Psychrobacter arcticus (strain DSM 17307 / VKM B-2377 / 273-4).